We begin with the raw amino-acid sequence, 567 residues long: Septation ring formation regulator EzrA (567 aa).

The Extracellular segment spans residues 1 to 2 (MG). Residues 3-21 (MAWIVLLLGAGAIIYNHVY) form a helical membrane-spanning segment. The Cytoplasmic portion of the chain corresponds to 22–567 (RKRMYREIDR…LWQEDNSREQ (546 aa)). Coiled-coil stretches lie at residues 98-159 (YRQA…AYRY) and 251-497 (HMER…IEQA).

Belongs to the EzrA family.

The protein resides in the cell membrane. Negative regulator of FtsZ ring formation; modulates the frequency and position of FtsZ ring formation. Inhibits FtsZ ring formation at polar sites. Interacts either with FtsZ or with one of its binding partners to promote depolymerization. The protein is Septation ring formation regulator EzrA of Geobacillus kaustophilus (strain HTA426).